The following is a 263-amino-acid chain: Proteasome subunit alpha type-1 (263 aa).

Position 1 is an N-acetylmethionine (M1). S110 is modified (phosphoserine; alternate). O-linked (GlcNAc) serine; alternate glycosylation is present at S110. Residue K115 forms a Glycyl lysine isopeptide (Lys-Gly) (interchain with G-Cter in ubiquitin) linkage. At S177 the chain carries Phosphoserine. A Glycyl lysine isopeptide (Lys-Gly) (interchain with G-Cter in ubiquitin) cross-link involves residue K208. The interval 232–263 (FLEGLEERPQRKAQPTQPADEPAEKADEPMEH) is disordered. The segment covering 253 to 263 (PAEKADEPMEH) has biased composition (basic and acidic residues).

It belongs to the peptidase T1A family. In terms of assembly, the 26S proteasome consists of a 20S proteasome core and two 19S regulatory subunits. The 20S proteasome core is a barrel-shaped complex made of 28 subunits that are arranged in four stacked rings. The two outer rings are each formed by seven alpha subunits, and the two inner rings are formed by seven beta subunits. The proteolytic activity is exerted by three beta-subunits PSMB5, PSMB6 and PSMB7. Interacts with NOTCH3. Interacts with ZFAND1.

The protein resides in the cytoplasm. Its subcellular location is the nucleus. In terms of biological role, component of the 20S core proteasome complex involved in the proteolytic degradation of most intracellular proteins. This complex plays numerous essential roles within the cell by associating with different regulatory particles. Associated with two 19S regulatory particles, forms the 26S proteasome and thus participates in the ATP-dependent degradation of ubiquitinated proteins. The 26S proteasome plays a key role in the maintenance of protein homeostasis by removing misfolded or damaged proteins that could impair cellular functions, and by removing proteins whose functions are no longer required. Associated with the PA200 or PA28, the 20S proteasome mediates ubiquitin-independent protein degradation. This type of proteolysis is required in several pathways including spermatogenesis (20S-PA200 complex) or generation of a subset of MHC class I-presented antigenic peptides (20S-PA28 complex). This is Proteasome subunit alpha type-1 (PSMA1) from Bos taurus (Bovine).